Reading from the N-terminus, the 502-residue chain is Probable cytosol aminopeptidase (502 aa).

Mn(2+) contacts are provided by Lys269 and Asp274. Residue Lys281 is part of the active site. Positions 292, 351, and 353 each coordinate Mn(2+). The active site involves Arg355.

Belongs to the peptidase M17 family. The cofactor is Mn(2+).

Its subcellular location is the cytoplasm. It catalyses the reaction Release of an N-terminal amino acid, Xaa-|-Yaa-, in which Xaa is preferably Leu, but may be other amino acids including Pro although not Arg or Lys, and Yaa may be Pro. Amino acid amides and methyl esters are also readily hydrolyzed, but rates on arylamides are exceedingly low.. The enzyme catalyses Release of an N-terminal amino acid, preferentially leucine, but not glutamic or aspartic acids.. Functionally, presumably involved in the processing and regular turnover of intracellular proteins. Catalyzes the removal of unsubstituted N-terminal amino acids from various peptides. This is Probable cytosol aminopeptidase from Photobacterium profundum (strain SS9).